A 270-amino-acid polypeptide reads, in one-letter code: Glutamate racemase (270 aa).

Residues 10–11 (DS) and 42–43 (YG) contribute to the substrate site. Catalysis depends on cysteine 73, which acts as the Proton donor/acceptor. 74-75 (NT) lines the substrate pocket. The Proton donor/acceptor role is filled by cysteine 184. A substrate-binding site is contributed by 185-186 (TH).

It belongs to the aspartate/glutamate racemases family.

It carries out the reaction L-glutamate = D-glutamate. It participates in cell wall biogenesis; peptidoglycan biosynthesis. Functionally, provides the (R)-glutamate required for cell wall biosynthesis. This is Glutamate racemase from Geobacter metallireducens (strain ATCC 53774 / DSM 7210 / GS-15).